The primary structure comprises 515 residues: Tripartite motif-containing protein 5 (515 aa).

The residue at position 2 (Ala2) is an N-acetylalanine. The segment at 15-60 adopts an RING-type zinc-finger fold; that stretch reads CPICLELLTEPLSLPCGHSFCQACITANHKESMLYKEEERSCPVCR. Residue Ser87 is modified to Phosphoserine. The B box-type zinc finger occupies 92 to 133; that stretch reads QKVDHCARHGEKLLLFCQEDSKVICWLCERSQEHRGHHTFLM. The Zn(2+) site is built by Cys97, His100, Cys119, and His125. The stretch at 137–225 forms a coiled coil; that stretch reads AQEYHVKLQT…LTKSETEMVQ (89 aa). A required for interaction with GABARAP and for autophagy region spans residues 187–200; sequence FEQLREILDWEESN. A B30.2/SPRY domain is found at 283-515; that stretch reads LKGMLDMFRE…VPMTLCSPSS (233 aa).

It belongs to the TRIM/RBCC family. Can form homodimers and homotrimers. In addition to lower-order dimerization, also exhibits a higher-order multimerization and both low- and high-order multimerizations are essential for its restriction activity. Interacts with BTBD1 and BTBD2. Interacts with PSMC4, PSMC5, PSMD7 and HSPA8/HSC70. Interacts (via B30.2/SPRY domain) with HSPA1A/B. Interacts with PSMC2, MAP3K7/TAK1, TAB2 and TAB3. Interacts with SQSTM1. Interacts with TRIM6 and TRIM34. Interacts with ULK1 (phosphorylated form), GABARAP, GABARAPL1, GABARAPL2, MAP1LC3A, MAP1LC3C and BECN1. In terms of processing, degraded in a proteasome-independent fashion in the absence of viral infection but in a proteasome-dependent fashion following exposure to restriction sensitive virus. Post-translationally, autoubiquitinated in a RING finger- and UBE2D2-dependent manner. Monoubiquitinated by TRIM21. Deubiquitinated by Yersinia YopJ. Ubiquitination may not lead to proteasomal degradation.

It localises to the cytoplasm. It is found in the nucleus. It catalyses the reaction S-ubiquitinyl-[E2 ubiquitin-conjugating enzyme]-L-cysteine + [acceptor protein]-L-lysine = [E2 ubiquitin-conjugating enzyme]-L-cysteine + N(6)-ubiquitinyl-[acceptor protein]-L-lysine.. It participates in protein modification; protein ubiquitination. Its function is as follows. Capsid-specific restriction factor that prevents infection from non-host-adapted retroviruses. Blocks viral replication early in the life cycle, after viral entry but before reverse transcription. In addition to acting as a capsid-specific restriction factor, also acts as a pattern recognition receptor that activates innate immune signaling in response to the retroviral capsid lattice. Binding to the viral capsid triggers its E3 ubiquitin ligase activity, and in concert with the heterodimeric ubiquitin conjugating enzyme complex UBE2V1-UBE2N (also known as UBC13-UEV1A complex) generates 'Lys-63'-linked polyubiquitin chains, which in turn are catalysts in the autophosphorylation of the MAP3K7/TAK1 complex (includes TAK1, TAB2, and TAB3). Activation of the MAP3K7/TAK1 complex by autophosphorylation results in the induction and expression of NF-kappa-B and MAPK-responsive inflammatory genes, thereby leading to an innate immune response in the infected cell. Plays a role in regulating autophagy through activation of autophagy regulator BECN1 by causing its dissociation from its inhibitors BCL2 and TAB2. The sequence is that of Tripartite motif-containing protein 5 (TRIM5) from Chlorocebus aethiops (Green monkey).